We begin with the raw amino-acid sequence, 684 residues long: U4/U6 small nuclear ribonucleoprotein Prp3 (684 aa).

In terms of domain architecture, PWI spans 1 to 87 (MSLSKRELDE…HSKSNSDRNR (87 aa)). A compositionally biased stretch (basic and acidic residues) spans 73–107 (GRSSRHSKSNSDRNRKRELKDVFGDDSEVSKESSG). Disordered regions lie at residues 73-109 (GRSSRHSKSNSDRNRKRELKDVFGDDSEVSKESSGVK) and 162-183 (FISPPTPQPKISSSSQSERLPI). Residues 170 to 183 (PKISSSSQSERLPI) show a composition bias toward polar residues.

In terms of assembly, component of the precatalytic spliceosome (spliceosome B complex). Component of the U4/U6-U5 tri-snRNP complex, a building block of the precatalytic spliceosome (spliceosome B complex). The U4/U6-U5 tri-snRNP complex is composed of the U4, U6 and U5 snRNAs and at least PRPF3, PRPF4, PRPF6, PRPF8, PRPF31, SNRNP200, TXNL4A, SNRNP40, SNRPB, SNRPD1, SNRPD2, SNRPD3, SNRPE, SNRPF, SNRPG, DDX23, CD2BP2, PPIH, SNU13, EFTUD2, SART1 and USP39, plus LSM2, LSM3, LSM4, LSM5, LSM6, LSM7 and LSM8.

The protein resides in the nucleus. It is found in the nucleus speckle. In terms of biological role, plays a role in pre-mRNA splicing as component of the U4/U6-U5 tri-snRNP complex that is involved in spliceosome assembly, and as component of the precatalytic spliceosome (spliceosome B complex). In Gallus gallus (Chicken), this protein is U4/U6 small nuclear ribonucleoprotein Prp3 (PRPF3).